The primary structure comprises 90 residues: uncharacterized protein (90 aa).

Transmembrane regions (helical) follow at residues 17 to 37 (ILSM…IYLV) and 55 to 75 (ICFG…WGIA).

It localises to the membrane. This is an uncharacterized protein from Schizosaccharomyces pombe (strain 972 / ATCC 24843) (Fission yeast).